Consider the following 245-residue polypeptide: Ribonuclease PH (245 aa).

Phosphate contacts are provided by residues R86 and 124 to 126 (GTR).

The protein belongs to the RNase PH family. As to quaternary structure, homohexameric ring arranged as a trimer of dimers.

It catalyses the reaction tRNA(n+1) + phosphate = tRNA(n) + a ribonucleoside 5'-diphosphate. Its function is as follows. Phosphorolytic 3'-5' exoribonuclease that plays an important role in tRNA 3'-end maturation. Removes nucleotide residues following the 3'-CCA terminus of tRNAs; can also add nucleotides to the ends of RNA molecules by using nucleoside diphosphates as substrates, but this may not be physiologically important. Probably plays a role in initiation of 16S rRNA degradation (leading to ribosome degradation) during starvation. This chain is Ribonuclease PH, found in Bacillus mycoides (strain KBAB4) (Bacillus weihenstephanensis).